Here is a 259-residue protein sequence, read N- to C-terminus: MYLRKPIQKIKSEVQIRLIRYYTASENAKVTYHEEMQNNFIATNIFQKALLTCGSAVIALLDPHRGDMIACLGEVTGENAIKYMHSKMLQTEEGQDILKNKPRINSKTIAFETLSQMPENSLGRVYADFMKDNNITADSRLPVQFIADPELAYVMQRYREVHDLVHASLFMKTNMLGEVTVKWVEGIQTKLPMCIGGGIWGAARLRPKHRQMYLKYYLPWAIRTGNNAKFLQGIYFEKRWEQDIDDFHKEMNIVRLLKK.

Positions 162, 163, 166, and 178 each coordinate Zn(2+).

Belongs to the COQ4 family. As to quaternary structure, component of a multi-subunit COQ enzyme complex. It depends on Zn(2+) as a cofactor.

The protein localises to the mitochondrion inner membrane. It catalyses the reaction a 4-hydroxy-3-methoxy-5-(all-trans-polyprenyl)benzoate + H(+) = a 2-methoxy-6-(all-trans-polyprenyl)phenol + CO2. It functions in the pathway cofactor biosynthesis; ubiquinone biosynthesis. Lyase that catalyzes the C1-decarboxylation of 4-hydroxy-3-methoxy-5-(all-trans-polyprenyl)benzoic acid into 2-methoxy-6-(all-trans-polyprenyl)phenol during ubiquinone biosynthesis. This chain is Ubiquinone biosynthesis protein COQ4 homolog, mitochondrial, found in Bombyx mori (Silk moth).